Here is a 326-residue protein sequence, read N- to C-terminus: Tagatose 1,6-diphosphate aldolase (326 aa).

The protein belongs to the aldolase LacD family.

The catalysed reaction is D-tagatofuranose 1,6-bisphosphate = D-glyceraldehyde 3-phosphate + dihydroxyacetone phosphate. The protein operates within carbohydrate metabolism; D-tagatose 6-phosphate degradation; D-glyceraldehyde 3-phosphate and glycerone phosphate from D-tagatose 6-phosphate: step 2/2. The polypeptide is Tagatose 1,6-diphosphate aldolase (Staphylococcus aureus (strain MW2)).